The sequence spans 86 residues: Neurotoxin-like protein pMD18-NTL1/2/4/5 (86 aa).

Positions 1-21 (MKTLLLTLVVLTIACLDLGYT) are cleaved as a signal peptide. Cystine bridges form between Cys24–Cys45, Cys38–Cys62, Cys66–Cys78, and Cys79–Cys84.

Belongs to the three-finger toxin family. Short-chain subfamily. Orphan group IX sub-subfamily. Expressed by the venom gland.

It localises to the secreted. This is Neurotoxin-like protein pMD18-NTL1/2/4/5 from Bungarus multicinctus (Many-banded krait).